The chain runs to 449 residues: Signal recognition particle protein (449 aa).

Residues 109 to 116 (GLQGSGKT), 191 to 195 (DTAGR), and 249 to 252 (SRID) contribute to the GTP site.

It belongs to the GTP-binding SRP family. SRP54 subfamily. As to quaternary structure, part of the signal recognition particle protein translocation system, which is composed of SRP and FtsY. SRP is a ribonucleoprotein composed of Ffh and a 4.5S RNA molecule.

The protein resides in the cytoplasm. It carries out the reaction GTP + H2O = GDP + phosphate + H(+). Its function is as follows. Involved in targeting and insertion of nascent membrane proteins into the cytoplasmic membrane. Binds to the hydrophobic signal sequence of the ribosome-nascent chain (RNC) as it emerges from the ribosomes. The SRP-RNC complex is then targeted to the cytoplasmic membrane where it interacts with the SRP receptor FtsY. Interaction with FtsY leads to the transfer of the RNC complex to the Sec translocase for insertion into the membrane, the hydrolysis of GTP by both Ffh and FtsY, and the dissociation of the SRP-FtsY complex into the individual components. This is Signal recognition particle protein from Rickettsia conorii (strain ATCC VR-613 / Malish 7).